The chain runs to 147 residues: Large ribosomal subunit protein uL15 (147 aa).

A compositionally biased stretch (basic and acidic residues) spans 1–20 (MTLRLNDLKPADGARTERTR). A disordered region spans residues 1–61 (MTLRLNDLKP…GFEGGQTPMQ (61 aa)). Over residues 23-33 (RGIGSGLGKTA) the composition is skewed to gly residues. Residues 34–47 (GRGHKGSFARKGGG) show a composition bias toward basic residues.

Belongs to the universal ribosomal protein uL15 family. Part of the 50S ribosomal subunit.

Functionally, binds to the 23S rRNA. This chain is Large ribosomal subunit protein uL15, found in Xanthomonas euvesicatoria pv. vesicatoria (strain 85-10) (Xanthomonas campestris pv. vesicatoria).